The primary structure comprises 262 residues: Granzyme A (262 aa).

The first 26 residues, 1 to 26 (MRNSYRFLASSLSVVVSLLLIPEDVC), serve as a signal peptide directing secretion. Residues 27-28 (EK) constitute a propeptide, activation peptide. One can recognise a Peptidase S1 domain in the interval 29–259 (IIGGNEVTPH…HLNWIIMTIK (231 aa)). Cysteines 54 and 70 form a disulfide. Residues His-69 and Asp-114 each act as charge relay system in the active site. Cystine bridges form between Cys-148–Cys-218, Cys-179–Cys-197, and Cys-208–Cys-234. A glycan (N-linked (GlcNAc...) asparagine) is linked at Asn-170. The Charge relay system role is filled by Ser-212.

This sequence belongs to the peptidase S1 family. Granzyme subfamily. As to quaternary structure, homodimer; disulfide-linked. Interacts with APEX1.

It localises to the secreted. The protein localises to the cytoplasmic granule. It catalyses the reaction Hydrolysis of proteins, including fibronectin, type IV collagen and nucleolin. Preferential cleavage: -Arg-|-Xaa-, -Lys-|-Xaa- &gt;&gt; -Phe-|-Xaa- in small molecule substrates.. In terms of biological role, abundant protease in the cytosolic granules of cytotoxic T-cells and NK-cells which activates caspase-independent pyroptosis when delivered into the target cell through the immunological synapse. It cleaves after Lys or Arg. Once delivered into the target cell, acts by catalyzing cleavage of gasdermin-B (GSDMB), releasing the pore-forming moiety of GSDMB, thereby triggering pyroptosis and target cell death. Cleaves APEX1 after 'Lys-31' and destroys its oxidative repair activity. Cleaves the nucleosome assembly protein SET after 'Lys-189', which disrupts its nucleosome assembly activity and allows the SET complex to translocate into the nucleus to nick and degrade the DNA. This Homo sapiens (Human) protein is Granzyme A.